The chain runs to 367 residues: ABI gene family member 3 (367 aa).

Positions 36–64 (CEDNYLQATDKRKALEETMAFTTQALASV) form a coiled coil. The tract at residues 163-273 (LSRTGTLSRK…LEVSQPPLEA (111 aa)) is disordered. Positions 206 to 225 (SAASSASSLASAGSAEGASG) are enriched in low complexity. Phosphoserine is present on residues serine 216 and serine 219. Residues 236–264 (ATPPPPPVAPVTPPPPPLSAEVFLPPPPL) are compositionally biased toward pro residues. Residues 309 to 367 (SYLEKVVTLYPYTRQKDNELSFSEGTVICVTRRYSDGWCEGVSSEGTGFFPGNYVEPSC) enclose the SH3 domain. At serine 343 the chain carries Phosphoserine.

Belongs to the ABI family. As to quaternary structure, may interact with PAK1 and PAK2. Probably interacts with TARSH.

The protein localises to the cytoplasm. In terms of biological role, inhibits ectopic tumor cell metastasis of SRD cells. In vitro, reduces cell motility. This Mus musculus (Mouse) protein is ABI gene family member 3 (Abi3).